The following is a 496-amino-acid chain: Putative zinc finger CCCH domain-containing protein 48 (496 aa).

Disordered stretches follow at residues methionine 1 to histidine 77 and methionine 108 to aspartate 194. The segment covering histidine 143–tyrosine 156 has biased composition (acidic residues). 3 C3H1-type zinc fingers span residues glutamate 377–aspartate 406, lysine 439–valine 467, and leucine 469–tyrosine 496.

The protein is Putative zinc finger CCCH domain-containing protein 48 of Oryza sativa subsp. japonica (Rice).